Here is a 312-residue protein sequence, read N- to C-terminus: Ribonuclease Z (312 aa).

Residues His63, His65, Asp67, His68, His140, Asp211, and His269 each coordinate Zn(2+). Asp67 functions as the Proton acceptor in the catalytic mechanism.

It belongs to the RNase Z family. In terms of assembly, homodimer. It depends on Zn(2+) as a cofactor.

The enzyme catalyses Endonucleolytic cleavage of RNA, removing extra 3' nucleotides from tRNA precursor, generating 3' termini of tRNAs. A 3'-hydroxy group is left at the tRNA terminus and a 5'-phosphoryl group is left at the trailer molecule.. Its function is as follows. Zinc phosphodiesterase, which displays some tRNA 3'-processing endonuclease activity. Probably involved in tRNA maturation, by removing a 3'-trailer from precursor tRNA. The polypeptide is Ribonuclease Z (Anoxybacillus flavithermus (strain DSM 21510 / WK1)).